Here is a 710-residue protein sequence, read N- to C-terminus: NAD(P)H-quinone oxidoreductase subunit 5, chloroplastic (710 aa).

A run of 17 helical transmembrane segments spans residues 9–29 (WIIP…LLIF), 40–60 (WSFQ…YLSI), 89–109 (IDPL…LVLI), 125–145 (FTYM…SNFI), 147–167 (IYIF…FWFT), 185–205 (GDFG…SFEF), 221–241 (VNLL…IAKS), 258–278 (TPIS…FLVA), 280–300 (LLPL…IGII), 327–347 (LGYM…FHLI), 354–374 (ALLF…IGYS), 396–416 (GAFL…CFWS), 425–445 (WLYS…TAFY), 519–539 (MLFP…LGIP), 571–591 (FLKH…IAFL), 657–676 (SFDL…LSFI), and 689–709 (IPFY…LFYK).

Belongs to the complex I subunit 5 family. NDH is composed of at least 16 different subunits, 5 of which are encoded in the nucleus.

The protein resides in the plastid. It localises to the chloroplast thylakoid membrane. The catalysed reaction is a plastoquinone + NADH + (n+1) H(+)(in) = a plastoquinol + NAD(+) + n H(+)(out). The enzyme catalyses a plastoquinone + NADPH + (n+1) H(+)(in) = a plastoquinol + NADP(+) + n H(+)(out). In terms of biological role, NDH shuttles electrons from NAD(P)H:plastoquinone, via FMN and iron-sulfur (Fe-S) centers, to quinones in the photosynthetic chain and possibly in a chloroplast respiratory chain. The immediate electron acceptor for the enzyme in this species is believed to be plastoquinone. Couples the redox reaction to proton translocation, and thus conserves the redox energy in a proton gradient. The chain is NAD(P)H-quinone oxidoreductase subunit 5, chloroplastic (ndhF) from Ipomoea purpurea (Common morning glory).